A 95-amino-acid polypeptide reads, in one-letter code: Aspartyl/glutamyl-tRNA(Asn/Gln) amidotransferase subunit C (95 aa).

This sequence belongs to the GatC family. Heterotrimer of A, B and C subunits.

It catalyses the reaction L-glutamyl-tRNA(Gln) + L-glutamine + ATP + H2O = L-glutaminyl-tRNA(Gln) + L-glutamate + ADP + phosphate + H(+). The enzyme catalyses L-aspartyl-tRNA(Asn) + L-glutamine + ATP + H2O = L-asparaginyl-tRNA(Asn) + L-glutamate + ADP + phosphate + 2 H(+). Its function is as follows. Allows the formation of correctly charged Asn-tRNA(Asn) or Gln-tRNA(Gln) through the transamidation of misacylated Asp-tRNA(Asn) or Glu-tRNA(Gln) in organisms which lack either or both of asparaginyl-tRNA or glutaminyl-tRNA synthetases. The reaction takes place in the presence of glutamine and ATP through an activated phospho-Asp-tRNA(Asn) or phospho-Glu-tRNA(Gln). The protein is Aspartyl/glutamyl-tRNA(Asn/Gln) amidotransferase subunit C of Citrifermentans bemidjiense (strain ATCC BAA-1014 / DSM 16622 / JCM 12645 / Bem) (Geobacter bemidjiensis).